Here is a 224-residue protein sequence, read N- to C-terminus: Protein FAM3D (224 aa).

The signal sequence occupies residues 1 to 25 (MRVSGVLRLLALIFAIVTTWMFIRS). Intrachain disulfides connect Cys-55–Cys-83 and Cys-61–Cys-218. The region spanning 64–222 (NYFAFKICSG…LEMEGCMPPK (159 aa)) is the GG-type lectin domain. An N-linked (GlcNAc...) asparagine glycan is attached at Asn-107.

Belongs to the FAM3 family. As to expression, abundantly expressed in placenta and weakly expressed in small intestine.

It localises to the secreted. The sequence is that of Protein FAM3D (FAM3D) from Homo sapiens (Human).